The sequence spans 214 residues: Leucyl/phenylalanyl-tRNA--protein transferase (214 aa).

This sequence belongs to the L/F-transferase family.

It localises to the cytoplasm. The catalysed reaction is N-terminal L-lysyl-[protein] + L-leucyl-tRNA(Leu) = N-terminal L-leucyl-L-lysyl-[protein] + tRNA(Leu) + H(+). It catalyses the reaction N-terminal L-arginyl-[protein] + L-leucyl-tRNA(Leu) = N-terminal L-leucyl-L-arginyl-[protein] + tRNA(Leu) + H(+). It carries out the reaction L-phenylalanyl-tRNA(Phe) + an N-terminal L-alpha-aminoacyl-[protein] = an N-terminal L-phenylalanyl-L-alpha-aminoacyl-[protein] + tRNA(Phe). In terms of biological role, functions in the N-end rule pathway of protein degradation where it conjugates Leu, Phe and, less efficiently, Met from aminoacyl-tRNAs to the N-termini of proteins containing an N-terminal arginine or lysine. The protein is Leucyl/phenylalanyl-tRNA--protein transferase of Cereibacter sphaeroides (strain KD131 / KCTC 12085) (Rhodobacter sphaeroides).